A 759-amino-acid chain; its full sequence is MESSPFNRRQWTSLSLRVTAKELSLVNKNKSSAIVEIFSKYQKAAEETNMEKKRSNTENLSQHFRKGTLTVLKKKWENPGLGAESHTDSLRNSSTEIRHRADHPPAEVTSHAASGAKADQEEQIHPRSRLRSPPEALVQGRYPHIKDGEDLKDHSTESKKMENCLGESRHEVEKSEISENTDASGKIEKYNVPLNRLKMMFEKGEPTQTKILRAQSRSASGRKISENSYSLDDLEIGPGQLSSSTFDSEKNESRRNLELPRLSETSIKDRMAKYQAAVSKQSSSTNYTNELKASGGEIKIHKMEQKENVPPGPEVCITHQEGEKISANENSLAVRSTPAEDDSRDSQVKSEVQQPVHPKPLSPDSRASSLSESSPPKAMKKFQAPARETCVECQKTVYPMERLLANQQVFHISCFRCSYCNNKLSLGTYASLHGRIYCKPHFNQLFKSKGNYDEGFGHRPHKDLWASKNENEEILERPAQLANARETPHSPGVEDAPIAKVGVLAASMEAKASSQQEKEDKPAETKKLRIAWPPPTELGSSGSALEEGIKMSKPKWPPEDEISKPEVPEDVDLDLKKLRRSSSLKERSRPFTVAASFQSTSVKSPKTVSPPIRKGWSMSEQSEESVGGRVAERKQVENAKASKKNGNVGKTTWQNKESKGETGKRSKEGHSLEMENENLVENGADSDEDDNSFLKQQSPQEPKSLNWSSFVDNTFAEEFTTQNQKSQDVELWEGEVVKELSVEEQIKRNRYYDEDEDEE.

Residue methionine 1 is modified to N-acetylmethionine. Serine 4, serine 15, and serine 55 each carry phosphoserine. The disordered stretch occupies residues 78–131 (NPGLGAESHTDSLRNSSTEIRHRADHPPAEVTSHAASGAKADQEEQIHPRSRLR). Over residues 96–105 (EIRHRADHPP) the composition is skewed to basic and acidic residues. Phosphoserine is present on serine 132. Positions 146-177 (KDGEDLKDHSTESKKMENCLGESRHEVEKSEI) are enriched in basic and acidic residues. Residues 146–182 (KDGEDLKDHSTESKKMENCLGESRHEVEKSEISENTD) form a disordered region. The short motif at 164–166 (CLG) is the Required for interaction with NPC1L1 element. 2 positions are modified to phosphoserine: alanine 183 and serine 225. Disordered stretches follow at residues 211-264 (ILRA…RLSE) and 323-381 (EKIS…AMKK). Residue tyrosine 229 is modified to Phosphotyrosine. A phosphoserine mark is found at serine 230 and serine 242. Positions 247–258 (DSEKNESRRNLE) are enriched in basic and acidic residues. A phosphoserine mark is found at serine 263, serine 343, serine 350, serine 362, serine 365, serine 369, and serine 374. A compositionally biased stretch (low complexity) spans 362-376 (SPDSRASSLSESSPP). An LIM zinc-binding domain is found at 388–448 (ETCVECQKTV…KPHFNQLFKS (61 aa)). Lysine 439 carries the N6-succinyllysine modification. Position 490 is a phosphoserine (serine 490). Residues 493 to 513 (VEDAPIAKVGVLAASMEAKAS) are required for interaction with MYO5B. A disordered region spans residues 509-709 (EAKASSQQEK…QEPKSLNWSS (201 aa)). Composition is skewed to basic and acidic residues over residues 516–527 (QEKEDKPAETKK) and 556–567 (WPPEDEISKPEV). A compositionally biased stretch (polar residues) spans 595 to 607 (ASFQSTSVKSPKT). 4 positions are modified to phosphoserine: serine 601, serine 604, serine 609, and serine 617. Over residues 644 to 655 (KNGNVGKTTWQN) the composition is skewed to polar residues. Residues 656 to 673 (KESKGETGKRSKEGHSLE) show a composition bias toward basic and acidic residues. Residues 674 to 691 (MENENLVENGADSDEDDN) are compositionally biased toward acidic residues. Residues serine 686, serine 692, serine 698, serine 726, and serine 741 each carry the phosphoserine modification. Residues 693–709 (FLKQQSPQEPKSLNWSS) show a composition bias toward polar residues.

As to quaternary structure, interacts with NPC1L1; bridges NPC1L1 with MYO5B. Interacts with MYO5B; bridges NPC1L1 with MYO5B. Interacts with PXN; this complex stabilizes actin dynamics. Interacts with F-actin and G-actin. Interacts with LUZP1 (via C-terminus); both proteins restrict ciliation and may work together to regulate this process. Binds RAB40B (GTP-bound); interaction influences LIMA1 subcellular localization in lamellipodia during cell migration. Post-translationally, ubiquitinated by the ECS(RAB40B) complex leading to its degradation. In terms of processing, phosphorylation of the C-terminal region by MAPK1/MAPK3 reduces its association with F-actin and contributes to actin filament reorganization and enhances cell motility. As to expression, highly expressed in placenta, kidney, pancreas, prostate, ovary, spleen and heart. Also detected in lung, liver, brain, skeletal muscle, thymus, testis and intestine. Not detected in leukocytes. Isoform Beta expressed generally at very low levels. Isoform Alpha abundant in epithelial cells from mammary gland, prostate and in normal oral keratinocytes. Low levels in aortic endothelial cells and dermal fibroblasts. Not detectable in myocardium.

It localises to the cytoplasm. The protein resides in the cell junction. It is found in the focal adhesion. Its subcellular location is the cytoskeleton. The protein localises to the stress fiber. It localises to the cell membrane. The protein resides in the cell projection. It is found in the ruffle. Its subcellular location is the lamellipodium. Functionally, actin-binding protein involved in actin cytoskeleton regulation and dynamics. Increases the number and size of actin stress fibers and inhibits membrane ruffling. Inhibits actin filament depolymerization. Bundles actin filaments, delays filament nucleation and reduces formation of branched filaments. Acts as a negative regulator of primary cilium formation. Plays a role in cholesterol homeostasis. Influences plasma cholesterol levels through regulation of intestinal cholesterol absorption. May act as a scaffold protein by regulating NPC1L1 transportation, an essential protein for cholesterol absorption, to the plasma membrane by recruiting MYO5B to NPC1L1, and thus facilitates cholesterol uptake. The polypeptide is LIM domain and actin-binding protein 1 (Homo sapiens (Human)).